A 448-amino-acid chain; its full sequence is tRNA modification GTPase MnmE (448 aa).

(6S)-5-formyl-5,6,7,8-tetrahydrofolate contacts are provided by Arg24, Glu81, and Lys120. A TrmE-type G domain is found at 216-373; it reads GLNVVLVGAP…LKRTLLREAG (158 aa). Asn226 is a binding site for K(+). Residues 226–231, 245–251, and 270–273 contribute to the GTP site; these read NVGKSS, TDIAGTT, and DTAG. Ser230 is a Mg(2+) binding site. K(+)-binding residues include Thr245, Ile247, and Thr250. Position 251 (Thr251) interacts with Mg(2+). Lys448 serves as a coordination point for (6S)-5-formyl-5,6,7,8-tetrahydrofolate.

Belongs to the TRAFAC class TrmE-Era-EngA-EngB-Septin-like GTPase superfamily. TrmE GTPase family. In terms of assembly, homodimer. Heterotetramer of two MnmE and two MnmG subunits. The cofactor is K(+).

The protein resides in the cytoplasm. Its function is as follows. Exhibits a very high intrinsic GTPase hydrolysis rate. Involved in the addition of a carboxymethylaminomethyl (cmnm) group at the wobble position (U34) of certain tRNAs, forming tRNA-cmnm(5)s(2)U34. The polypeptide is tRNA modification GTPase MnmE (Neisseria meningitidis serogroup A / serotype 4A (strain DSM 15465 / Z2491)).